Here is a 139-residue protein sequence, read N- to C-terminus: Protein archease (139 aa).

Ca(2+)-binding residues include Asp12, Asp138, and Ile139.

Belongs to the archease family.

Its function is as follows. Activates the tRNA-splicing ligase complex by facilitating the enzymatic turnover of catalytic subunit RtcB. Acts by promoting the guanylylation of RtcB, a key intermediate step in tRNA ligation. Can also alter the NTP specificity of RtcB such that ATP, dGTP or ITP is used efficiently. The chain is Protein archease from Sulfolobus acidocaldarius (strain ATCC 33909 / DSM 639 / JCM 8929 / NBRC 15157 / NCIMB 11770).